A 1425-amino-acid polypeptide reads, in one-letter code: Zinc finger FYVE domain-containing protein 9 (1425 aa).

Disordered stretches follow at residues 201-255 (ESTE…IGRD) and 291-352 (EDLT…SGRN). The span at 202-225 (STEKDMNSEKQMDPLNRPKTEGRS) shows a compositional bias: basic and acidic residues. Composition is skewed to polar residues over residues 230 to 245 (CPTS…SPSQ) and 296 to 312 (KISS…SFSH). Ser306 and Ser668 each carry phosphoserine. Residues 699–758 (DSQAPNCMKCEARFTFTKRRHHCRACGKVFCASCCSLKCKLLYMDRKEARVCVICHSVLM) form an FYVE-type zinc finger. Residues Cys705, Cys708, Cys721, Cys724, Cys729, Cys732, Cys750, and Cys753 each coordinate Zn(2+). The SBD stretch occupies residues 767–823 (MSASSQSPNPNNPAEYCSTIPPLQQAQASGALSSPPPTVMVPVGVLKHPGAEVAQPR).

As to quaternary structure, interacts (via the SBD region) with SMAD2; the interaction recruits SMAD2 to the TGF-beta receptor and is disrupted by phosphorylation of SMAD2 upon TGF-beta receptor activation. Interacts with SMAD3. Interacts with TGFBR1 and TGFBR2; the interaction recruits SMAD2 to the TGF-beta receptor. Interacts with PML. Ubiquitous. In the brain found primarily in the cerebrovascular smooth muscle cells and reactive astrocytes.

The protein localises to the cytoplasm. It localises to the early endosome membrane. Early endosomal protein that functions to recruit SMAD2/SMAD3 to intracellular membranes and to the TGF-beta receptor. Plays a significant role in TGF-mediated signaling by regulating the subcellular location of SMAD2 and SMAD3 and modulating the transcriptional activity of the SMAD3/SMAD4 complex. Possibly associated with TGF-beta receptor internalization. The polypeptide is Zinc finger FYVE domain-containing protein 9 (ZFYVE9) (Homo sapiens (Human)).